Consider the following 946-residue polypeptide: Villin-4 (946 aa).

4 Gelsolin-like repeats span residues N28 to K109, V152 to K219, L274 to F339, and E641 to F715. Disordered stretches follow at residues A744–P789, P801–Q832, and G844–D902. Residues Q765–H777 are compositionally biased toward polar residues. Residues S874 to N883 show a composition bias toward acidic residues. Residues D881 to F946 enclose the HP domain.

This sequence belongs to the villin/gelsolin family.

It is found in the cytoplasm. It localises to the cytoskeleton. Its function is as follows. Ca(2+)-regulated actin-binding protein. Binds actin microfilaments (MFs). Involved in actin filament bundling, severing and capping. Caps the barbed end of actin filaments and is able to sever them in a calcium-dependent manner. This is Villin-4 from Oryza sativa subsp. japonica (Rice).